We begin with the raw amino-acid sequence, 456 residues long: MGRTREAGCVAAGMVIGAGACYCVYRLTWGKDENEKLWDEEEEEEEEEEEKSCSDKTEKELKTNVGVGARGKPQDDSKSKVEVNVGPENGPGVKKEVHPESQSGGGLEAKAKALFKTLKEQARAKAGRGIRLPNISRNRTLTSSLPCPGGRGGGCHPGRTGSRARNRTSGKVKRKNRSKSNKAPATAWPVRKGKFSFPYKIDDILSAPDLQKVLNILERTNDPFTQEVALVTLGNNAAYSFNQNAIRELGGVPIIAKLIKTRDPIIREKTYNALNNLSVNSENQGKIKTYISQVCDDTMVCRLDSAVQMAGLRLLTNMTVTNHYQHLLSYSFPDFFALLFLGNHFTKIQTMKLIINFTENPAMTRELVSCKVPSELISLFNKEWDREILLNILTLFENINDNIKSEGLASSRKEFSRSSLFFLFKESGVCVKKIKALASHKDLVVKVKVLKVLTKL.

Over 1-6 (MGRTRE) the chain is Mitochondrial intermembrane. Mitochondrion outer membrane (MOM)-targeting sequence regions lie at residues 1–6 (MGRTRE) and 26–36 (RLTWGKDENEK). The chain crosses the membrane as a helical; Signal-anchor span at residues 7–29 (AGCVAAGMVIGAGACYCVYRLTW). Residues 30 to 456 (GKDENEKLWD…VKVLKVLTKL (427 aa)) lie on the Cytoplasmic side of the membrane. 2 disordered regions span residues 37 to 106 (LWDE…SGGG) and 139 to 186 (RTLT…APAT). Positions 38–50 (WDEEEEEEEEEEE) are enriched in acidic residues. 2 stretches are compositionally biased toward basic and acidic residues: residues 51–62 (KSCSDKTEKELK) and 72–81 (KPQDDSKSKV). A compositionally biased stretch (basic residues) spans 162 to 180 (SRARNRTSGKVKRKNRSKS). ARM repeat units follow at residues 198–238 (PYKI…NNAA), 240–279 (SFNQNAIRELGGVPIIAKLIKTRDPIIREKTYNALNNLSV), 361–401 (PAMT…NIND), and 418–456 (SSLFFLFKESGVCVKKIKALASHKDLVVKVKVLKVLTKL).

This sequence belongs to the eutherian X-chromosome-specific Armcx family. Interacts with MIRO1. In terms of tissue distribution, widely expressed in the adult nervous tissue, especially in the forebrain, including the cerebral cortex, hippocampus and thalamus.

It is found in the mitochondrion. The protein resides in the mitochondrion outer membrane. Functionally, regulates mitochondrial transport during axon regeneration. Increases the proportion of motile mitochondria by recruiting stationary mitochondria into the motile pool. Enhances mitochondria movement and neurite growth in both adult axons and embryonic neurons. Promotes neuronal survival and axon regeneration after nerve injury. May link mitochondria to the Trak1-kinesin motor complex via its interaction with Miro1. The protein is Armadillo repeat-containing X-linked protein 1 (Armcx1) of Mus musculus (Mouse).